A 225-amino-acid polypeptide reads, in one-letter code: MVSIYFFFFFLLFYALGSFPTGLIIGKLTQKKDLRLVGSRNVGATNASRILGFKWGIVVFLFDFAKGLVPAIICLRFKNFKDLIFINGCDNRYKDIAICLLVILPIFGHMFSIFNKFKGGKAIATSVGVITAINPFIGLLGILFFVLLFIFVGYASLASIMATLLVDLLLFFINHHPGITNISQNQILYFFIGLSTCFIILKHHSNIIRLWQGKEYKFSFIKKRK.

The next 6 helical transmembrane spans lie at 6 to 26 (FFFFFLLFYALGSFPTGLIIG), 55 to 75 (WGIVVFLFDFAKGLVPAIICL), 95 to 115 (DIAICLLVILPIFGHMFSIFN), 135 to 155 (PFIGLLGILFFVLLFIFVGYA), 160 to 180 (IMATLLVDLLLFFINHHPGIT), and 187 to 207 (ILYFFIGLSTCFIILKHHSNI).

This sequence belongs to the PlsY family. In terms of assembly, probably interacts with PlsX.

The protein localises to the cell membrane. It carries out the reaction an acyl phosphate + sn-glycerol 3-phosphate = a 1-acyl-sn-glycero-3-phosphate + phosphate. It functions in the pathway lipid metabolism; phospholipid metabolism. Its function is as follows. Catalyzes the transfer of an acyl group from acyl-phosphate (acyl-PO(4)) to glycerol-3-phosphate (G3P) to form lysophosphatidic acid (LPA). This enzyme utilizes acyl-phosphate as fatty acyl donor, but not acyl-CoA or acyl-ACP. The sequence is that of Glycerol-3-phosphate acyltransferase from Phytoplasma australiense.